The following is a 511-amino-acid chain: 2,3-bisphosphoglycerate-independent phosphoglycerate mutase (511 aa).

The Mn(2+) site is built by aspartate 14 and serine 64. The Phosphoserine intermediate role is filled by serine 64. Residues histidine 125, 155–156 (RD), arginine 187, arginine 193, 259–262 (RADR), and lysine 333 each bind substrate. Mn(2+) is bound by residues aspartate 400, histidine 404, aspartate 441, histidine 442, and histidine 460.

Belongs to the BPG-independent phosphoglycerate mutase family. As to quaternary structure, monomer. The cofactor is Mn(2+).

It catalyses the reaction (2R)-2-phosphoglycerate = (2R)-3-phosphoglycerate. Its pathway is carbohydrate degradation; glycolysis; pyruvate from D-glyceraldehyde 3-phosphate: step 3/5. In terms of biological role, catalyzes the interconversion of 2-phosphoglycerate and 3-phosphoglycerate. In Pseudomonas putida (strain ATCC 47054 / DSM 6125 / CFBP 8728 / NCIMB 11950 / KT2440), this protein is 2,3-bisphosphoglycerate-independent phosphoglycerate mutase.